A 243-amino-acid chain; its full sequence is UDP-2,3-diacylglucosamine hydrolase (243 aa).

Asp9, His11, Asp42, Asn79, and His114 together coordinate Mn(2+). Position 79–80 (79–80 (NR)) interacts with substrate. Substrate-binding residues include Asp122, Ser160, Asn164, and His195. His195 and His197 together coordinate Mn(2+).

It belongs to the LpxH family. It depends on Mn(2+) as a cofactor.

It is found in the cell inner membrane. The catalysed reaction is UDP-2-N,3-O-bis[(3R)-3-hydroxytetradecanoyl]-alpha-D-glucosamine + H2O = 2-N,3-O-bis[(3R)-3-hydroxytetradecanoyl]-alpha-D-glucosaminyl 1-phosphate + UMP + 2 H(+). It functions in the pathway glycolipid biosynthesis; lipid IV(A) biosynthesis; lipid IV(A) from (3R)-3-hydroxytetradecanoyl-[acyl-carrier-protein] and UDP-N-acetyl-alpha-D-glucosamine: step 4/6. Its function is as follows. Hydrolyzes the pyrophosphate bond of UDP-2,3-diacylglucosamine to yield 2,3-diacylglucosamine 1-phosphate (lipid X) and UMP by catalyzing the attack of water at the alpha-P atom. Involved in the biosynthesis of lipid A, a phosphorylated glycolipid that anchors the lipopolysaccharide to the outer membrane of the cell. The polypeptide is UDP-2,3-diacylglucosamine hydrolase (Coxiella burnetii (strain RSA 331 / Henzerling II)).